The sequence spans 701 residues: Polyribonucleotide nucleotidyltransferase (701 aa).

Positions 487 and 493 each coordinate Mg(2+). A KH domain is found at 554-613; that stretch reads PTMIAMKIDTDKIRDVIGKGGATIRAICEETKASIDIEDDGSIKIFGETKEAAEAAKQRI. One can recognise an S1 motif domain in the interval 623-691; it reads GKIYVGKVER…NRGRIKLSIK (69 aa).

Belongs to the polyribonucleotide nucleotidyltransferase family. Component of the RNA degradosome, which is a multiprotein complex involved in RNA processing and mRNA degradation. Mg(2+) is required as a cofactor.

It localises to the cytoplasm. It catalyses the reaction RNA(n+1) + phosphate = RNA(n) + a ribonucleoside 5'-diphosphate. Functionally, involved in mRNA degradation. Catalyzes the phosphorolysis of single-stranded polyribonucleotides processively in the 3'- to 5'-direction. The chain is Polyribonucleotide nucleotidyltransferase from Pseudomonas putida (strain GB-1).